A 189-amino-acid polypeptide reads, in one-letter code: Putative L,D-transpeptidase in ATP synthase subunits region ORF 5 (189 aa).

A signal peptide (tat-type signal) is located at residues M1–A35. Residues P59–I189 form the L,D-TPase catalytic domain. H149 serves as the catalytic Proton donor/acceptor. Residue C165 is the Nucleophile of the active site.

This sequence belongs to the YkuD family. Predicted to be exported by the Tat system. The position of the signal peptide cleavage has not been experimentally proven.

Its pathway is cell wall biogenesis; peptidoglycan biosynthesis. This is Putative L,D-transpeptidase in ATP synthase subunits region ORF 5 from Fuscovulum blasticum (Rhodobacter blasticus).